The sequence spans 464 residues: Probable glycosyltransferase Saci_1499 (464 aa).

Helical transmembrane passes span 6–26, 300–320, 337–357, 373–393, 416–436, and 439–459; these read IFLN…QIIL, LIIY…STLL, ALLF…SLAL, LTAF…KGLL, IIAI…LYIY, and YYVT…TMLL.

This sequence belongs to the glycosyltransferase 2 family.

Its subcellular location is the cell membrane. Its function is as follows. Probably part of a 4-gene DNA damage response locus in which the upstream ups system, in combination with this downstream locus, functions in homologous recombination to rescue Sulfolobales from DNA-damaging threats. The protein is Probable glycosyltransferase Saci_1499 of Sulfolobus acidocaldarius (strain ATCC 33909 / DSM 639 / JCM 8929 / NBRC 15157 / NCIMB 11770).